The primary structure comprises 105 residues: Met repressor (105 aa).

Belongs to the MetJ family. In terms of assembly, homodimer.

The protein localises to the cytoplasm. This regulatory protein, when combined with SAM (S-adenosylmethionine) represses the expression of the methionine regulon and of enzymes involved in SAM synthesis. This Haemophilus influenzae (strain 86-028NP) protein is Met repressor.